The primary structure comprises 282 residues: Deoxyribonuclease-1 (282 aa).

Positions Met1–Ser22 are cleaved as a signal peptide. An N-linked (GlcNAc...) asparagine glycan is attached at Asn40. Glu100 is a catalytic residue. Cys123 and Cys126 form a disulfide bridge. Residue His156 is part of the active site. Residues Cys195 and Cys231 are joined by a disulfide bond.

The protein belongs to the DNase I family. The cofactor is Ca(2+). Requires Mg(2+) as cofactor. Post-translationally, the only differences between the A and B forms and the C and D forms are in the compositions of the carbohydrate bound to Asn-40.

It is found in the secreted. The protein resides in the zymogen granule. The protein localises to the nucleus envelope. It carries out the reaction Endonucleolytic cleavage to 5'-phosphodinucleotide and 5'-phosphooligonucleotide end-products.. In terms of biological role, serum endocuclease secreted into body fluids by a wide variety of exocrine and endocrine organs. Expressed by non-hematopoietic tissues and preferentially cleaves protein-free DNA. Among other functions, seems to be involved in cell death by apoptosis. Binds specifically to G-actin and blocks actin polymerization. Together with DNASE1L3, plays a key role in degrading neutrophil extracellular traps (NETs). NETs are mainly composed of DNA fibers and are released by neutrophils to bind pathogens during inflammation. Degradation of intravascular NETs by DNASE1 and DNASE1L3 is required to prevent formation of clots that obstruct blood vessels and cause organ damage following inflammation. This Bos taurus (Bovine) protein is Deoxyribonuclease-1 (DNASE1).